A 295-amino-acid chain; its full sequence is Beta-lactamase-like protein 2 homolog (295 aa).

Zn(2+)-binding residues include His-79, His-81, Asp-83, His-84, His-141, Asp-160, and His-195.

The protein belongs to the metallo-beta-lactamase superfamily. Glyoxalase II family.

This Caenorhabditis elegans protein is Beta-lactamase-like protein 2 homolog.